The chain runs to 196 residues: ATP-dependent Clp protease proteolytic subunit (196 aa).

Ser101 acts as the Nucleophile in catalysis. His126 is an active-site residue.

This sequence belongs to the peptidase S14 family. Component of the chloroplastic Clp protease core complex.

It is found in the plastid. It localises to the chloroplast stroma. The catalysed reaction is Hydrolysis of proteins to small peptides in the presence of ATP and magnesium. alpha-casein is the usual test substrate. In the absence of ATP, only oligopeptides shorter than five residues are hydrolyzed (such as succinyl-Leu-Tyr-|-NHMec, and Leu-Tyr-Leu-|-Tyr-Trp, in which cleavage of the -Tyr-|-Leu- and -Tyr-|-Trp bonds also occurs).. In terms of biological role, cleaves peptides in various proteins in a process that requires ATP hydrolysis. Has a chymotrypsin-like activity. Plays a major role in the degradation of misfolded proteins. The protein is ATP-dependent Clp protease proteolytic subunit of Helianthus annuus (Common sunflower).